The chain runs to 1338 residues: Aldehyde oxidase (1338 aa).

In terms of domain architecture, 2Fe-2S ferredoxin-type spans 5 to 92; that stretch reads SELLFYVNGR…GAAVTTVEGI (88 aa). Residues Cys-44, Cys-49, Cys-52, and Cys-74 each contribute to the [2Fe-2S] cluster site. Gln-113 contributes to the Mo-molybdopterin binding site. [2Fe-2S] cluster contacts are provided by Cys-114, Cys-117, Cys-149, and Cys-151. Mo-molybdopterin is bound at residue Cys-151. The FAD-binding PCMH-type domain maps to 236–421; that stretch reads FGSERMMWFS…VSVNIPYSRK (186 aa). FAD contacts are provided by residues 264 to 271, Ala-345, Ser-354, His-358, Asp-367, and Leu-411; that span reads VIMGNTSV. Mo-molybdopterin is bound by residues 806 to 807 and Met-1047; that span reads AF. At Ser-1068 the chain carries Phosphoserine. Residues 1088-1091, Gln-1203, and Leu-1268 contribute to the Mo-molybdopterin site; that span reads GSVV. Residue Glu-1270 is the Proton acceptor; for azaheterocycle hydroxylase activity of the active site.

It belongs to the xanthine dehydrogenase family. As to quaternary structure, homodimer. [2Fe-2S] cluster is required as a cofactor. FAD serves as cofactor. The cofactor is Mo-molybdopterin. Abundant in liver, expressed in adipose tissue and at lower levels in lung, skeletal muscle, pancreas. In contrast to mice, no significant gender difference in AOX1 expression level (at protein level).

Its subcellular location is the cytoplasm. It catalyses the reaction an aldehyde + O2 + H2O = a carboxylate + H2O2 + H(+). The enzyme catalyses retinal + O2 + H2O = retinoate + H2O2 + H(+). Is very potently inhibited by raloxifene. Also inhibited by estradiol, ethinyl estradiol, hydralazine, menadione, isovanillin and thioridazine. Not inhibited by allopurinol, a xanthine dehydrogenase potent inhibitor. Oxidase with broad substrate specificity, oxidizing aromatic azaheterocycles, such as N1-methylnicotinamide, N-methylphthalazinium and phthalazine, as well as aldehydes, such as benzaldehyde, retinal, pyridoxal, and vanillin. Plays a key role in the metabolism of xenobiotics and drugs containing aromatic azaheterocyclic substituents. Participates in the bioactivation of prodrugs such as famciclovir, catalyzing the oxidation step from 6-deoxypenciclovir to penciclovir, which is a potent antiviral agent. Is probably involved in the regulation of reactive oxygen species homeostasis. May be a prominent source of superoxide generation via the one-electron reduction of molecular oxygen. May also catalyze nitric oxide (NO) production via the reduction of nitrite to NO with NADH or aldehyde as electron donor. May play a role in adipogenesis. The polypeptide is Aldehyde oxidase (Homo sapiens (Human)).